The chain runs to 448 residues: Gamma conglutin 2 (448 aa).

The N-terminal stretch at 1-33 (MAKNMAQIFPFIAVFLSCSFIFVLSSSQNSQSL) is a signal peptide. One can recognise a Peptidase A1 domain in the interval 63 to 428 (HWANIHKRTP…DLERSRVEFN (366 aa)). 5 disulfide bridges follow: Cys-91–Cys-181, Cys-105–Cys-118, Cys-110–Cys-136, Cys-121–Cys-131, and Cys-349–Cys-390. A glycan (N-linked (GlcNAc...) asparagine) is linked at Asn-133.

Belongs to the peptidase A1 family. In terms of assembly, two-subunit monomeric unit made of alpha and beta subunits coupled by disulfide bonds (at pH 4.5 and under non-reducing conditions). Can also form oligomers including dimer, tetramer and cyclic hexamer (trimer of dimers) (at pH &gt; 5.5). Component of globulins complexes which accumulate in seeds. Interacts with flavonoids (e.g. apigenin glucosides) present in globulins complexes. Glycosylated on alpha chain. As to expression, expressed in developing seeds and in the young roots and cotyledons of germinating seeds and young seedlings.

Its subcellular location is the secreted. The protein resides in the extracellular space. Its function is as follows. Sulfur-rich seed storage protein that remains undegraded at germination. The polypeptide is Gamma conglutin 2 (Lupinus albus (White lupine)).